The primary structure comprises 837 residues: Amyloid-beta A4 precursor protein-binding family A member 1 (837 aa).

Disordered regions lie at residues 1 to 93, 238 to 342, and 358 to 435; these read MNHL…DTAE, YDER…SKEK, and EEVK…ESRK. Over residues 23–38 the composition is skewed to acidic residues; that stretch reads ESVEADLEHPEVEEEQ. A phosphoserine mark is found at Ser-78, Ser-242, Ser-246, Ser-248, Ser-263, Ser-280, and Ser-285. The interval 226–314 is munc-18-1 binding; the sequence is YRQEALGARL…TPAGGRPDSP (89 aa). Positions 238-254 are enriched in basic and acidic residues; the sequence is YDERSDGESDSPEKEAE. Phosphothreonine is present on Thr-305. Ser-313 and Ser-367 each carry phosphoserine. Thr-370 bears the Phosphothreonine mark. The interval 373–436 is LIN-2/CASK binding; the sequence is EPKEPIWVMR…ASTNKESRKS (64 aa). Positions 387–398 are enriched in basic and acidic residues; the sequence is PTRDCDDQRPMD. The segment covering 399-418 has biased composition (low complexity); it reads GDSPSPGSSSPLGAESSSTS. 4 positions are modified to phosphoserine: Ser-401, Ser-403, Ser-408, and Ser-568. In terms of domain architecture, PID spans 457–643; it reads DGIIFAANYL…LLNTQDMYND (187 aa). The interval 626–641 is autoinhibitory helix linker; sequence LSQKEYSDLLNTQDMY. 2 consecutive PDZ domains span residues 656–742 and 747–822; these read DVFI…IVRC and TVLI…TMPA.

As to quaternary structure, part of a multimeric complex containing STXBP1 and STX1A. Interacts with STXBP1. Also part of the brain-specific heterotrimeric complex LIN-10/X11-alpha, LIN-2/CASK, and LIN7. Component of the brain-specific heterotrimeric complex (LIN-10-LIN-2-LIN-7 complex) composed of at least APBA1, CASK, and LIN7, which associates with the motor protein KIF17 to transport vesicles along microtubules. Within the complex, interacts (via PDZ domain) with the motor protein KIF17; the interaction is direct and is required for association of KIF17 with the cargo that is to be transported. Both isoform 1 and isoform 2 bind to the cytoplasmic domain of amyloid protein (APP). Interacts (via PDZ 1 and 2 domains) with FSPB. Isoform 2, but not isoform 1, interacts (via its truncated PID domain) with active, GTP-bound RAB6A and RAB6B. In terms of tissue distribution, brain and spinal cord. Isoform 2 is expressed in testis and brain, but not detected in lung, liver or spleen.

The protein localises to the cytoplasm. It localises to the perinuclear region. It is found in the nucleus. Its subcellular location is the golgi apparatus. Its function is as follows. Putative function in synaptic vesicle exocytosis by binding to Munc18-1, an essential component of the synaptic vesicle exocytotic machinery. May modulate processing of the amyloid-beta precursor protein (APP) and hence formation of APP-beta. Component of the LIN-10-LIN-2-LIN-7 complex, which associates with the motor protein KIF17 to transport vesicles containing N-methyl-D-aspartate (NMDA) receptor subunit NR2B along microtubules. This Homo sapiens (Human) protein is Amyloid-beta A4 precursor protein-binding family A member 1 (APBA1).